The chain runs to 497 residues: Zinc finger protein ZIC 2-B (497 aa).

Disordered regions lie at residues 58–107 and 143–180; these read HMGA…TSQA and SAAAGGGQHGLFGPPAGSLHHHPHHHHQLSHGEHPQGH. A compositionally biased stretch (gly residues) spans 66-88; it reads PGGGSGGGSGGGGGAGPNGGAGA. Polar residues predominate over residues 97–107; sequence PGQTSAFTSQA. A compositionally biased stretch (basic residues) spans 161-171; sequence LHHHPHHHHQL. The segment at 273 to 308 adopts a C2H2-type 1; atypical zinc-finger fold; the sequence is LICKWIDPEQLNNPKKSCNKTFSTMHELVTHMSVEH. Residues 317-344 form a C2H2-type 2; atypical zinc finger; sequence HICFWEECAREGKPFKAKYKLVNHIRVH. C2H2-type zinc fingers lie at residues 350–374, 380–404, and 410–432; these read FPCPFPGCGKVFARSENLKIHKRTH, FQCEFEGCDRRFANSSDRKKHMHVH, and YLCKMCDKSYTHPSSLRKHMKVH. The segment at 423 to 473 is disordered; that stretch reads SSLRKHMKVHESSPQGSESSPAASSGYESSTPPGLVSPNSETQNPNLSPAA. Positions 434–452 are enriched in low complexity; the sequence is SSPQGSESSPAASSGYESS. Over residues 459–469 the composition is skewed to polar residues; it reads SPNSETQNPNL.

The protein belongs to the GLI C2H2-type zinc-finger protein family.

It localises to the nucleus. The protein resides in the cytoplasm. Its function is as follows. Transcriptional repressor that inhibits neurogenesis and induces neural and neural crest differentiation. Regulates anteroposterior patterning in early development by inhibiting expression of the nodal genes through the inhibition of vegt. Required for gastrulation movements and for proper anterior neural and axial development. May also act as a transcriptional activator. May bind to the minimal GLI-consensus sequence 5'-TGGGTGGTC-3'. The sequence is that of Zinc finger protein ZIC 2-B (zic2-b) from Xenopus laevis (African clawed frog).